The primary structure comprises 1177 residues: Transcription-repair-coupling factor (1177 aa).

Residues 638–799 enclose the Helicase ATP-binding domain; the sequence is DMERERPMDR…MLGVRDLSVI (162 aa). An ATP-binding site is contributed by 651–658; the sequence is GDVGYGKT. The DEEQ box motif lies at 752–755; the sequence is DEEQ. The Helicase C-terminal domain maps to 820 to 974; sequence LVREAIEREL…GFKIAMRDLT (155 aa).

This sequence in the N-terminal section; belongs to the UvrB family. It in the C-terminal section; belongs to the helicase family. RecG subfamily.

The protein resides in the cytoplasm. In terms of biological role, couples transcription and DNA repair by recognizing RNA polymerase (RNAP) stalled at DNA lesions. Mediates ATP-dependent release of RNAP and its truncated transcript from the DNA, and recruitment of nucleotide excision repair machinery to the damaged site. Probably required to repair non-bulky DNA lesions. This chain is Transcription-repair-coupling factor, found in Bacillus subtilis (strain 168).